We begin with the raw amino-acid sequence, 164 residues long: Endoribonuclease YbeY (164 aa).

Positions 111, 115, and 121 each coordinate Zn(2+). Positions 142–164 are disordered; that stretch reads GYPDPYADDETETSPTVTTKDSE. Polar residues predominate over residues 154–164; it reads TSPTVTTKDSE.

Belongs to the endoribonuclease YbeY family. Requires Zn(2+) as cofactor.

It is found in the cytoplasm. Single strand-specific metallo-endoribonuclease involved in late-stage 70S ribosome quality control and in maturation of the 3' terminus of the 16S rRNA. This is Endoribonuclease YbeY from Pseudomonas fluorescens (strain Pf0-1).